The primary structure comprises 661 residues: Centrosomal protein of 76 kDa (661 aa).

It belongs to the CEP76 family.

The protein resides in the cytoplasm. It is found in the cytoskeleton. It localises to the microtubule organizing center. Its subcellular location is the centrosome. The protein localises to the centriole. Its function is as follows. Centrosomal protein involved in regulation of centriole duplication. Required to limit centriole duplication to once per cell cycle by preventing centriole reduplication. This Xenopus tropicalis (Western clawed frog) protein is Centrosomal protein of 76 kDa (cep76).